The primary structure comprises 134 residues: UPF0412 protein YaaI (134 aa).

The N-terminal stretch at 1-23 is a signal peptide; that stretch reads MKSVFTLSASLAISLLLCCTAQA.

This sequence belongs to the UPF0412 family.

The protein is UPF0412 protein YaaI of Escherichia coli O7:K1 (strain IAI39 / ExPEC).